A 488-amino-acid chain; its full sequence is E3 ubiquitin-protein ligase TRIM34 (488 aa).

The RING-type zinc-finger motif lies at 15-60 (CPICLELLTEPLSLDCGHSLCRACITVSNKEAVTSMGGKSSCPVCG). Residues 92–134 (KKRDLCDHHGEKLLLFCKEDRKVICWLCERSQEHRGHHTVLTE) form a B box-type zinc finger. Zn(2+) contacts are provided by cysteine 97, histidine 100, cysteine 119, and histidine 125. The stretch at 131-239 (VLTEEVFKEC…VRELISDVEC (109 aa)) forms a coiled coil. One can recognise a B30.2/SPRY domain in the interval 283 to 488 (LSRMLQMFRE…APMTLCPPSS (206 aa)).

It belongs to the TRIM/RBCC family. As to quaternary structure, homotrimer. Interacts (via B-box and SPRY domain) with TRIM5. (Microbial infection) Interacts (via the B30.2/SPRY domain) with HIV-1 capsid complexes. As to expression, is the most abundant form. It is highly expressed in the placenta, spleen, colon and peripheral blood leukocytes.

The protein localises to the cytoplasm. It localises to the mitochondrion. It carries out the reaction S-ubiquitinyl-[E2 ubiquitin-conjugating enzyme]-L-cysteine + [acceptor protein]-L-lysine = [E2 ubiquitin-conjugating enzyme]-L-cysteine + N(6)-ubiquitinyl-[acceptor protein]-L-lysine.. The protein operates within protein modification; protein ubiquitination. Functions as antiviral protein and contributes to the defense against retroviral infections. Acts as a capsid-specific restriction factor with the help of TRIM5 and prevents infection from non-host-adapted retroviruses. During influenza A virus infection, promotes programmed cell death by targeting ZBP1 for 'Lys-63'-linked polyubiquitination. In turn, promotes ZBP1 recruitment of RIPK3 to mediate virus-induced programmed necrosis. Negatively regulates the function of mitochondria by enhancing mitochondrial depolarization leading to cytochrome c release and mitochondria-dependent apoptosis. Also promotes the formation of multinucleated giant cells by means of cell fusion and phagocytosis in epithelial cells. The polypeptide is E3 ubiquitin-protein ligase TRIM34 (TRIM34) (Homo sapiens (Human)).